Consider the following 932-residue polypeptide: LPS-assembly protein LptD (932 aa).

Residues 1-33 (MALKSPAFRRKFPLLVTGGLLALQPLATSYAVA) form the signal peptide. A disordered region spans residues 54–87 (PVNNLPPRPVHEGAAVSSGTEAASEGETADRPML).

The protein belongs to the LptD family. Component of the lipopolysaccharide transport and assembly complex. Interacts with LptE and LptA.

The protein resides in the cell outer membrane. Together with LptE, is involved in the assembly of lipopolysaccharide (LPS) at the surface of the outer membrane. In Pseudomonas putida (strain GB-1), this protein is LPS-assembly protein LptD.